The sequence spans 302 residues: Bifunctional protein FolD (302 aa).

NADP(+) is bound by residues Gly165–Ser167, Ser190, and Ile231.

This sequence belongs to the tetrahydrofolate dehydrogenase/cyclohydrolase family. In terms of assembly, homodimer.

The enzyme catalyses (6R)-5,10-methylene-5,6,7,8-tetrahydrofolate + NADP(+) = (6R)-5,10-methenyltetrahydrofolate + NADPH. It carries out the reaction (6R)-5,10-methenyltetrahydrofolate + H2O = (6R)-10-formyltetrahydrofolate + H(+). It participates in one-carbon metabolism; tetrahydrofolate interconversion. Catalyzes the oxidation of 5,10-methylenetetrahydrofolate to 5,10-methenyltetrahydrofolate and then the hydrolysis of 5,10-methenyltetrahydrofolate to 10-formyltetrahydrofolate. The polypeptide is Bifunctional protein FolD (Prochlorococcus marinus (strain MIT 9303)).